The following is a 365-amino-acid chain: tRNA 2-selenouridine synthase (365 aa).

The Rhodanese domain maps to F12–Q136. The active-site S-selanylcysteine intermediate is the C95.

Belongs to the SelU family. In terms of assembly, monomer.

The catalysed reaction is 5-methylaminomethyl-2-thiouridine(34) in tRNA + selenophosphate + (2E)-geranyl diphosphate + H2O + H(+) = 5-methylaminomethyl-2-selenouridine(34) in tRNA + (2E)-thiogeraniol + phosphate + diphosphate. It catalyses the reaction 5-methylaminomethyl-2-thiouridine(34) in tRNA + (2E)-geranyl diphosphate = 5-methylaminomethyl-S-(2E)-geranyl-thiouridine(34) in tRNA + diphosphate. It carries out the reaction 5-methylaminomethyl-S-(2E)-geranyl-thiouridine(34) in tRNA + selenophosphate + H(+) = 5-methylaminomethyl-2-(Se-phospho)selenouridine(34) in tRNA + (2E)-thiogeraniol. The enzyme catalyses 5-methylaminomethyl-2-(Se-phospho)selenouridine(34) in tRNA + H2O = 5-methylaminomethyl-2-selenouridine(34) in tRNA + phosphate. Involved in the post-transcriptional modification of the uridine at the wobble position (U34) of tRNA(Lys), tRNA(Glu) and tRNA(Gln). Catalyzes the conversion of 2-thiouridine (S2U-RNA) to 2-selenouridine (Se2U-RNA). Acts in a two-step process involving geranylation of 2-thiouridine (S2U) to S-geranyl-2-thiouridine (geS2U) and subsequent selenation of the latter derivative to 2-selenouridine (Se2U) in the tRNA chain. In Verminephrobacter eiseniae (strain EF01-2), this protein is tRNA 2-selenouridine synthase.